Here is a 304-residue protein sequence, read N- to C-terminus: Aspartate carbamoyltransferase catalytic subunit (304 aa).

2 residues coordinate carbamoyl phosphate: Arg-49 and Thr-50. Lys-77 contributes to the L-aspartate binding site. Residues Arg-99, His-127, and Gln-130 each contribute to the carbamoyl phosphate site. The L-aspartate site is built by Arg-160 and Arg-211. Carbamoyl phosphate-binding residues include Ala-252 and Pro-253.

Belongs to the aspartate/ornithine carbamoyltransferase superfamily. ATCase family. In terms of assembly, heterododecamer (2C3:3R2) of six catalytic PyrB chains organized as two trimers (C3), and six regulatory PyrI chains organized as three dimers (R2).

It catalyses the reaction carbamoyl phosphate + L-aspartate = N-carbamoyl-L-aspartate + phosphate + H(+). Its pathway is pyrimidine metabolism; UMP biosynthesis via de novo pathway; (S)-dihydroorotate from bicarbonate: step 2/3. Catalyzes the condensation of carbamoyl phosphate and aspartate to form carbamoyl aspartate and inorganic phosphate, the committed step in the de novo pyrimidine nucleotide biosynthesis pathway. The polypeptide is Aspartate carbamoyltransferase catalytic subunit (Bacillus cereus (strain ATCC 10987 / NRS 248)).